A 921-amino-acid chain; its full sequence is Isoleucine--tRNA ligase (921 aa).

Positions 57-67 (PYANGELHMGH) match the 'HIGH' region motif. Glu-552 serves as a coordination point for L-isoleucyl-5'-AMP. A 'KMSKS' region motif is present at residues 593-597 (KMSKS). Residue Lys-596 participates in ATP binding. 4 residues coordinate Zn(2+): Cys-888, Cys-891, Cys-908, and Cys-911.

The protein belongs to the class-I aminoacyl-tRNA synthetase family. IleS type 1 subfamily. In terms of assembly, monomer. It depends on Zn(2+) as a cofactor.

The protein localises to the cytoplasm. The catalysed reaction is tRNA(Ile) + L-isoleucine + ATP = L-isoleucyl-tRNA(Ile) + AMP + diphosphate. Its function is as follows. Catalyzes the attachment of isoleucine to tRNA(Ile). As IleRS can inadvertently accommodate and process structurally similar amino acids such as valine, to avoid such errors it has two additional distinct tRNA(Ile)-dependent editing activities. One activity is designated as 'pretransfer' editing and involves the hydrolysis of activated Val-AMP. The other activity is designated 'posttransfer' editing and involves deacylation of mischarged Val-tRNA(Ile). In Listeria innocua serovar 6a (strain ATCC BAA-680 / CLIP 11262), this protein is Isoleucine--tRNA ligase.